The primary structure comprises 553 residues: COP9 signalosome complex subunit 10 (553 aa).

Residues 21–46 are compositionally biased toward acidic residues; that stretch reads AEMEEDSDEMGVYEEETSQGAEEEVP. A disordered region spans residues 21–47; the sequence is AEMEEDSDEMGVYEEETSQGAEEEVPL. Residues 298–474 enclose the PCI domain; that stretch reads LRTHFSACLQ…DYVYFGDEPR (177 aa).

Component of a COP9 signalosome-like (CSN) complex.

It is found in the cytoplasm. The protein resides in the nucleus. In terms of biological role, component of the COP9 signalosome (CSN) complex that acts as an regulator of the ubiquitin (Ubl) conjugation pathway by mediating the deneddylation of the cullin subunit of SCF-type E3 ubiquitin-protein ligase complexes. The CSN complex is involved in the regulation of the mating pheromone response. The polypeptide is COP9 signalosome complex subunit 10 (RRI2) (Eremothecium gossypii (strain ATCC 10895 / CBS 109.51 / FGSC 9923 / NRRL Y-1056) (Yeast)).